The chain runs to 379 residues: Glucose-1-phosphate adenylyltransferase (379 aa).

Alpha-D-glucose 1-phosphate contacts are provided by residues Gly164, 179-180 (EK), and Ser190.

Belongs to the bacterial/plant glucose-1-phosphate adenylyltransferase family. As to quaternary structure, homotetramer.

It carries out the reaction alpha-D-glucose 1-phosphate + ATP + H(+) = ADP-alpha-D-glucose + diphosphate. Its pathway is glycan biosynthesis; glycogen biosynthesis. Involved in the biosynthesis of ADP-glucose, a building block required for the elongation reactions to produce glycogen. Catalyzes the reaction between ATP and alpha-D-glucose 1-phosphate (G1P) to produce pyrophosphate and ADP-Glc. This chain is Glucose-1-phosphate adenylyltransferase, found in Streptococcus uberis (strain ATCC BAA-854 / 0140J).